The following is a 184-amino-acid chain: NADH-quinone oxidoreductase subunit B (184 aa).

[4Fe-4S] cluster contacts are provided by cysteine 37, cysteine 38, cysteine 103, and cysteine 132.

Belongs to the complex I 20 kDa subunit family. As to quaternary structure, NDH-1 is composed of 14 different subunits. Subunits NuoB, C, D, E, F, and G constitute the peripheral sector of the complex. [4Fe-4S] cluster is required as a cofactor.

The protein resides in the cell membrane. The enzyme catalyses a quinone + NADH + 5 H(+)(in) = a quinol + NAD(+) + 4 H(+)(out). In terms of biological role, NDH-1 shuttles electrons from NADH, via FMN and iron-sulfur (Fe-S) centers, to quinones in the respiratory chain. The immediate electron acceptor for the enzyme in this species is believed to be a menaquinone. Couples the redox reaction to proton translocation (for every two electrons transferred, four hydrogen ions are translocated across the cytoplasmic membrane), and thus conserves the redox energy in a proton gradient. This chain is NADH-quinone oxidoreductase subunit B, found in Mycobacterium marinum (strain ATCC BAA-535 / M).